The sequence spans 426 residues: Glutamate-1-semialdehyde 2,1-aminomutase (426 aa).

Residue K265 is modified to N6-(pyridoxal phosphate)lysine.

Belongs to the class-III pyridoxal-phosphate-dependent aminotransferase family. HemL subfamily. Homodimer. The cofactor is pyridoxal 5'-phosphate.

It localises to the cytoplasm. The enzyme catalyses (S)-4-amino-5-oxopentanoate = 5-aminolevulinate. It participates in porphyrin-containing compound metabolism; protoporphyrin-IX biosynthesis; 5-aminolevulinate from L-glutamyl-tRNA(Glu): step 2/2. This chain is Glutamate-1-semialdehyde 2,1-aminomutase, found in Yersinia pseudotuberculosis serotype O:1b (strain IP 31758).